The primary structure comprises 188 residues: Molybdopterin synthase catalytic subunit (188 aa).

Ser-20 is modified (phosphoserine). Substrate is bound by residues 143–144, Lys-159, and 166–168; these read HR and KKE.

The protein belongs to the MoaE family. MOCS2B subfamily. As to quaternary structure, heterotetramer; composed of 2 small (MOCS2A) and 2 large (MOCS2B) subunits. Highest levels are found in heart and skeletal muscle. Lower levels are present in brain, kidney and pancreas. Very low levels are found in lung and peripheral blood leukocytes.

Its subcellular location is the cytoplasm. The protein localises to the cytosol. The catalysed reaction is 2 [molybdopterin-synthase sulfur-carrier protein]-C-terminal-Gly-aminoethanethioate + cyclic pyranopterin phosphate + H2O = molybdopterin + 2 [molybdopterin-synthase sulfur-carrier protein]-C-terminal Gly-Gly + 2 H(+). It participates in cofactor biosynthesis; molybdopterin biosynthesis. In terms of biological role, catalytic subunit of the molybdopterin synthase complex, a complex that catalyzes the conversion of precursor Z into molybdopterin. Acts by mediating the incorporation of 2 sulfur atoms from thiocarboxylated MOCS2A into precursor Z to generate a dithiolene group. This is Molybdopterin synthase catalytic subunit from Homo sapiens (Human).